The following is an 840-amino-acid chain: Axin-2 (840 aa).

Residues 1 to 75 (MSSAVLVTLL…EGRASPDSPL (75 aa)) are disordered. The Tankyrase-binding motif signature appears at 21–30 (APRPPVPGEE). Residues 42–55 (KVQSTKPMPVSSNA) show a composition bias toward polar residues. The span at 56-69 (RRNEDGLGEPEGRA) shows a compositional bias: basic and acidic residues. The 120-residue stretch at 81-200 (SLHSLLGDQD…LTSDIYLEYV (120 aa)) folds into the RGS domain. Disordered stretches follow at residues 300–363 (SELS…KEMT), 398–435 (IRED…EEDP), 447–485 (LKTP…LLPT), 572–614 (RGGT…GDRS), and 715–745 (ASQQ…EDHK). The segment covering 303–318 (SSDALTDDSMSMTDSS) has biased composition (low complexity). Residues 327–413 (MGSKKQLQRE…KEGSEQALSS (87 aa)) form an interaction with GSK3B region. Residues 413–478 (SRDGAPVQHP…HHHQHHHHQQ (66 aa)) form an interaction with beta-catenin region. The segment covering 468–478 (DHHHQHHHHQQ) has biased composition (basic residues). Positions 758 to 840 (ASELVVTYFF…RILGKVERID (83 aa)) constitute a DIX domain.

As to quaternary structure, interacts with glycogen synthase kinase-3 beta (GSK3B) and beta-catenin. The interaction between axin and beta-catenin occurs via the armadillo repeats contained in beta-catenin. Interacts with SMAD7 and RNF111. Interacts with ANKRD6. Interacts with SIAH1. Interacts with SIAH2. Post-translationally, ADP-ribosylated by tankyrase TNKS and TNKS2. Poly-ADP-ribosylated protein is recognized by RNF146, followed by ubiquitination and subsequent activation of the Wnt signaling pathway. In terms of processing, ubiquitinated by RNF146 when poly-ADP-ribosylated, leading to its degradation and subsequent activation of the Wnt signaling pathway. Deubiquitinated by USP34, deubiquitinated downstream of beta-catenin stabilization step: deubiquitination is important Wnt signaling to positively regulate beta-catenin (CTNBB1)-mediated transcription. Probably phosphorylated by GSK3B and dephosphorylated by PP2A. Expressed in Tcf7-positive innate-like T-cells (at protein level).

Its subcellular location is the cytoplasm. Inhibitor of the Wnt signaling pathway. Down-regulates beta-catenin. Probably facilitate the phosphorylation of beta-catenin and APC by GSK3B. The sequence is that of Axin-2 from Mus musculus (Mouse).